A 361-amino-acid polypeptide reads, in one-letter code: Chorismate synthase (361 aa).

Positions 48 and 54 each coordinate NADP(+). Residues 125-127, 238-239, glycine 278, 293-297, and arginine 319 each bind FMN; these read RSS, NA, and KPTSS.

Belongs to the chorismate synthase family. Homotetramer. The cofactor is FMNH2.

It catalyses the reaction 5-O-(1-carboxyvinyl)-3-phosphoshikimate = chorismate + phosphate. It functions in the pathway metabolic intermediate biosynthesis; chorismate biosynthesis; chorismate from D-erythrose 4-phosphate and phosphoenolpyruvate: step 7/7. Its function is as follows. Catalyzes the anti-1,4-elimination of the C-3 phosphate and the C-6 proR hydrogen from 5-enolpyruvylshikimate-3-phosphate (EPSP) to yield chorismate, which is the branch point compound that serves as the starting substrate for the three terminal pathways of aromatic amino acid biosynthesis. This reaction introduces a second double bond into the aromatic ring system. This chain is Chorismate synthase, found in Citrobacter koseri (strain ATCC BAA-895 / CDC 4225-83 / SGSC4696).